Here is a 115-residue protein sequence, read N- to C-terminus: U3-lycotoxin-Ls1o (115 aa).

The N-terminal stretch at 1-20 is a signal peptide; that stretch reads MKFVLLFGVLLVTLFSYSSA. A propeptide spanning residues 21–44 is cleaved from the precursor; it reads EMLDDFDQADEDELLSLIEKEEAR. Cystine bridges form between C48–C63, C55–C72, C62–C87, and C74–C85.

The protein belongs to the neurotoxin 19 (CSTX) family. 01 subfamily. Expressed by the venom gland.

Its subcellular location is the secreted. This chain is U3-lycotoxin-Ls1o, found in Lycosa singoriensis (Wolf spider).